The sequence spans 273 residues: Putative phosphoenolpyruvate synthase regulatory protein (273 aa).

153–160 (GVSRCGKT) is an ADP binding site.

Belongs to the pyruvate, phosphate/water dikinase regulatory protein family. PSRP subfamily.

It carries out the reaction [pyruvate, water dikinase] + ADP = [pyruvate, water dikinase]-phosphate + AMP + H(+). The catalysed reaction is [pyruvate, water dikinase]-phosphate + phosphate + H(+) = [pyruvate, water dikinase] + diphosphate. Its function is as follows. Bifunctional serine/threonine kinase and phosphorylase involved in the regulation of the phosphoenolpyruvate synthase (PEPS) by catalyzing its phosphorylation/dephosphorylation. This chain is Putative phosphoenolpyruvate synthase regulatory protein, found in Pectobacterium atrosepticum (strain SCRI 1043 / ATCC BAA-672) (Erwinia carotovora subsp. atroseptica).